Consider the following 304-residue polypeptide: Glutaminase (304 aa).

Substrate-binding residues include Ser-63, Asn-114, Glu-158, Asn-165, Tyr-189, Tyr-240, and Val-258.

Belongs to the glutaminase family. In terms of assembly, homotetramer.

The catalysed reaction is L-glutamine + H2O = L-glutamate + NH4(+). The polypeptide is Glutaminase (Shewanella sp. (strain ANA-3)).